Reading from the N-terminus, the 405-residue chain is SPbeta prophage-derived uncharacterized protein YomR (405 aa).

Residues 9–36 (QLKQNNIQINSLRGSNDRAEKHMLEHEQ) are a coiled coil.

The sequence is that of SPbeta prophage-derived uncharacterized protein YomR (yomR) from Bacillus subtilis (strain 168).